The sequence spans 101 residues: Urease subunit beta (101 aa).

It belongs to the urease beta subunit family. In terms of assembly, heterotrimer of UreA (gamma), UreB (beta) and UreC (alpha) subunits. Three heterotrimers associate to form the active enzyme.

The protein localises to the cytoplasm. It catalyses the reaction urea + 2 H2O + H(+) = hydrogencarbonate + 2 NH4(+). It functions in the pathway nitrogen metabolism; urea degradation; CO(2) and NH(3) from urea (urease route): step 1/1. This chain is Urease subunit beta, found in Rhizobium leguminosarum bv. trifolii (strain WSM2304).